The chain runs to 250 residues: Imidazole glycerol phosphate synthase subunit HisF (250 aa).

Catalysis depends on residues aspartate 11 and aspartate 130.

The protein belongs to the HisA/HisF family. As to quaternary structure, heterodimer of HisH and HisF.

The protein resides in the cytoplasm. It catalyses the reaction 5-[(5-phospho-1-deoxy-D-ribulos-1-ylimino)methylamino]-1-(5-phospho-beta-D-ribosyl)imidazole-4-carboxamide + L-glutamine = D-erythro-1-(imidazol-4-yl)glycerol 3-phosphate + 5-amino-1-(5-phospho-beta-D-ribosyl)imidazole-4-carboxamide + L-glutamate + H(+). The protein operates within amino-acid biosynthesis; L-histidine biosynthesis; L-histidine from 5-phospho-alpha-D-ribose 1-diphosphate: step 5/9. In terms of biological role, IGPS catalyzes the conversion of PRFAR and glutamine to IGP, AICAR and glutamate. The HisF subunit catalyzes the cyclization activity that produces IGP and AICAR from PRFAR using the ammonia provided by the HisH subunit. This chain is Imidazole glycerol phosphate synthase subunit HisF, found in Bacteroides fragilis (strain YCH46).